A 148-amino-acid chain; its full sequence is Deoxyuridine 5'-triphosphate nucleotidohydrolase (148 aa).

Residues 67–69 (RSG), N80, 84–86 (LID), and M94 each bind substrate.

This sequence belongs to the dUTPase family. Requires Mg(2+) as cofactor.

The catalysed reaction is dUTP + H2O = dUMP + diphosphate + H(+). Its pathway is pyrimidine metabolism; dUMP biosynthesis; dUMP from dCTP (dUTP route): step 2/2. Its function is as follows. This enzyme is involved in nucleotide metabolism: it produces dUMP, the immediate precursor of thymidine nucleotides and it decreases the intracellular concentration of dUTP so that uracil cannot be incorporated into DNA. This chain is Deoxyuridine 5'-triphosphate nucleotidohydrolase, found in Francisella philomiragia subsp. philomiragia (strain ATCC 25017 / CCUG 19701 / FSC 153 / O#319-036).